Consider the following 182-residue polypeptide: Isopentenyl-diphosphate Delta-isomerase (182 aa).

Residues histidine 23 and histidine 30 each coordinate Mn(2+). Positions 28-162 (PRHLAFSCHV…PWAFSPWLVE (135 aa)) constitute a Nudix hydrolase domain. Cysteine 65 is an active-site residue. Residue cysteine 65 participates in Mg(2+) binding. A Mn(2+)-binding site is contributed by histidine 67. Mg(2+) is bound at residue glutamate 85. Mn(2+) contacts are provided by glutamate 112 and glutamate 114. The active site involves glutamate 114.

Belongs to the IPP isomerase type 1 family. The cofactor is Mg(2+). Mn(2+) is required as a cofactor.

Its subcellular location is the cytoplasm. The catalysed reaction is isopentenyl diphosphate = dimethylallyl diphosphate. The protein operates within isoprenoid biosynthesis; dimethylallyl diphosphate biosynthesis; dimethylallyl diphosphate from isopentenyl diphosphate: step 1/1. In terms of biological role, catalyzes the 1,3-allylic rearrangement of the homoallylic substrate isopentenyl (IPP) to its highly electrophilic allylic isomer, dimethylallyl diphosphate (DMAPP). The protein is Isopentenyl-diphosphate Delta-isomerase of Brevibacterium linens.